Reading from the N-terminus, the 273-residue chain is Large ribosomal subunit protein uL2c (273 aa).

Positions 1–31 (MAIHLSKTSSPSTRNGAVNSQVKSNSRNRLI) are enriched in polar residues. Disordered regions lie at residues 1–53 (MAIH…GHRG) and 222–273 (MNPV…RRSK).

This sequence belongs to the universal ribosomal protein uL2 family. In terms of assembly, part of the 50S ribosomal subunit.

It localises to the plastid. Its subcellular location is the chloroplast. The chain is Large ribosomal subunit protein uL2c (rpl2) from Pisum sativum (Garden pea).